Consider the following 2767-residue polypeptide: Serine/threonine-protein kinase ATM (2767 aa).

Residues 1713-2317 (NVVMASNHCQ…FYQLYPLVFA (605 aa)) enclose the FAT domain. One can recognise a PI3K/PI4K catalytic domain in the interval 2419–2734 (WTNETTQCGG…KLDGREAGTM (316 aa)). A G-loop region spans residues 2425–2431 (QCGGLNA). Residues 2601-2609 (GLGDRHTQN) are catalytic loop. Residues 2621–2645 (HIDFGIAFEQGKIQTTPETVPFRLT) are activation loop. Residues 2735–2767 (GDSNVEAQVERLINEATLPSNLCMLFPGWDPHL) form the FATC domain.

It belongs to the PI3/PI4-kinase family. ATM subfamily.

It localises to the nucleus. It is found in the chromosome. The protein resides in the telomere. The enzyme catalyses L-seryl-[protein] + ATP = O-phospho-L-seryl-[protein] + ADP + H(+). It carries out the reaction L-threonyl-[protein] + ATP = O-phospho-L-threonyl-[protein] + ADP + H(+). Functionally, serine/threonine-protein kinase which recognizes the substrate consensus sequence [ST]-Q. Required to suppress spontaneous apoptosis of proliferating cells during development, and for their proper differentiation. Required for female fertility. Protects telomeres from fusion, maybe by recruiting or maintaining chromatin-modifying complexes such as Su(var)205/HP1. May activate checkpoint signaling in response to DNA double-stranded breaks induced by low-dose ionizing radiation. May phosphorylate histone H2AV. This is Serine/threonine-protein kinase ATM (tefu) from Drosophila melanogaster (Fruit fly).